The following is a 428-amino-acid chain: Histone deacetylase 3 (428 aa).

The histone deacetylase stretch occupies residues 3–316 (KTVAYFYDPD…WTYETSLLVE (314 aa)). The 1D-myo-inositol 1,4,5,6-tetrakisphosphate site is built by His17, Gly21, and Lys25. The active site involves His135. Asp170, His172, and Asp259 together coordinate Zn(2+). Position 265 (Arg265) interacts with 1D-myo-inositol 1,4,5,6-tetrakisphosphate. 2 stretches are compositionally biased toward basic and acidic residues: residues 388-405 (DRTD…ENYS) and 415-428 (DGDH…DVEI). Positions 388–428 (DRTDEADAEERGPEENYSRPEAPNEFYDGDHDNDKESDVEI) are disordered. Ser424 is modified (phosphoserine).

Belongs to the histone deacetylase family. HD type 1 subfamily. In terms of assembly, interacts with HDAC7 and HDAC9. Interacts with DAXX, KDM4A, HDAC10 and DACH1. Found in a complex with NCOR1 and NCOR2. Component of the N-Cor repressor complex, at least composed of NCOR1, NCOR2, HDAC3, TBL1X, TBL1R, CORO2A and GPS2. Interacts with BCOR, MJD2A/JHDM3A, NRIP1, PRDM6 and SRY. Interacts with BTBD14B. Interacts with GLIS2. Interacts (via the DNA-binding domain) with NR2C1; the interaction recruits phosphorylated NR2C1 to PML bodies for sumoylation. Component of the Notch corepressor complex. Interacts with CBFA2T3 and NKAP. Interacts with APEX1; the interaction is not dependent on the acetylated status of APEX1. Interacts with ZMYND15. Interacts with SMRT/NCOR2 and BCL6 on DNA enhancer elements. Interacts with INSM1. Interacts with XBP1 isoform 1; the interaction occurs in endothelial cell (EC) under disturbed flow. Interacts (via C-terminus) with CCAR2 (via N-terminus). Interacts with and deacetylates MEF2D. Interacts with BEND3. Interacts with NKAPL. Interacts with DHX36; this interaction occurs in a RNA-dependent manner. Interacts weakly with CRY1; this interaction is enhanced in the presence of FBXL3. Interacts with FBXL3 and BMAL1. Interacts with NCOR1. Interacts with RARA. Interacts with SETD5. As to quaternary structure, (Microbial infection) Interacts with human cytomegalovirus (HHV-5) immediate early protein IE1; this interaction decreases histone acetylation and allows transcriptional activation by the virus. Zn(2+) serves as cofactor. Sumoylated in vitro. Post-translationally, deubiquitinated on 'Lys-63'-linked ubiquitin chains by USP38; leading to a decreased level of histone acetylation. Widely expressed.

The protein resides in the nucleus. The protein localises to the chromosome. It is found in the cytoplasm. It localises to the cytosol. The enzyme catalyses N(6)-acetyl-L-lysyl-[histone] + H2O = L-lysyl-[histone] + acetate. It carries out the reaction N(6)-acetyl-L-lysyl-[protein] + H2O = L-lysyl-[protein] + acetate. It catalyses the reaction N(6)-(2E)-butenoyl-L-lysyl-[protein] + H2O = (2E)-2-butenoate + L-lysyl-[protein]. The catalysed reaction is N(6)-(2-hydroxyisobutanoyl)-L-lysyl-[protein] + H2O = 2-hydroxy-2-methylpropanoate + L-lysyl-[protein]. The enzyme catalyses N(6)-[(S)-lactoyl]-L-lysyl-[protein] + H2O = (S)-lactate + L-lysyl-[protein]. Its activity is regulated as follows. Inositol tetraphosphate (1D-myo-inositol 1,4,5,6-tetrakisphosphate) promotes the histone deacetylase activity by acting as an intermolecular glue between HDAC3 and NCOR2, thereby promoting its association with the N-Cor complex, a prerequisite for the histone deacetylase activity. Histone deacetylase that catalyzes the deacetylation of lysine residues on the N-terminal part of the core histones (H2A, H2B, H3 and H4), and some other non-histone substrates. Histone deacetylation gives a tag for epigenetic repression and plays an important role in transcriptional regulation, cell cycle progression and developmental events. Histone deacetylases act via the formation of large multiprotein complexes, such as N-Cor repressor complex, which activate the histone deacetylase activity. Participates in the BCL6 transcriptional repressor activity by deacetylating the H3 'Lys-27' (H3K27) on enhancer elements, antagonizing EP300 acetyltransferase activity and repressing proximal gene expression. Acts as a molecular chaperone for shuttling phosphorylated NR2C1 to PML bodies for sumoylation. Contributes, together with XBP1 isoform 1, to the activation of NFE2L2-mediated HMOX1 transcription factor gene expression in a PI(3)K/mTORC2/Akt-dependent signaling pathway leading to endothelial cell (EC) survival under disturbed flow/oxidative stress. Regulates both the transcriptional activation and repression phases of the circadian clock in a deacetylase activity-independent manner. During the activation phase, promotes the accumulation of ubiquitinated BMAL1 at the E-boxes and during the repression phase, blocks FBXL3-mediated CRY1/2 ubiquitination and promotes the interaction of CRY1 and BMAL1. The NCOR1-HDAC3 complex regulates the circadian expression of the core clock gene BMAL1 and the genes involved in lipid metabolism in the liver. Also functions as a deacetylase for non-histone targets, such as KAT5, MEF2D, MAPK14, RARA and STAT3. Serves as a corepressor of RARA, mediating its deacetylation and repression, leading to inhibition of RARE DNA element binding. In association with RARA, plays a role in the repression of microRNA-10a and thereby in the inflammatory response. In addition to protein deacetylase activity, also acts as a protein-lysine deacylase by recognizing other acyl groups: catalyzes removal of (2E)-butenoyl (crotonyl), lactoyl (lactyl) and 2-hydroxyisobutanoyl (2-hydroxyisobutyryl) acyl groups from lysine residues, leading to protein decrotonylation, delactylation and de-2-hydroxyisobutyrylation, respectively. Catalyzes decrotonylation of MAPRE1/EB1. Mediates delactylation NBN/NBS1, thereby inhibiting DNA double-strand breaks (DSBs) via homologous recombination (HR). In Homo sapiens (Human), this protein is Histone deacetylase 3 (HDAC3).